The following is a 255-amino-acid chain: MLLPAANVIMQLAVPGVGYGVLESPVDSGNVYKHPFKRARTTGTYLAVATIGTESDRALIRGAVDVAHRQVRSTASSPVSYNAFDPKLQLWVAACLYRYFVDQHEFLYGPLEDATADAVYQDAKRLGTTLQVPEGMWPPDRVAFDEYWKRSLDGLQIDAPVREHLRGVASVAFLPWPLRAVAGPFNLFATTGFLAPEFRAMMQLEWSQAQQRRFEWLLSVLRLADRLIPHRAWIFVYQLYLWDMRFRARHGRRIV.

A run of 2 helical transmembrane segments spans residues 2-22 and 168-188; these read LLPA…YGVL and VASV…FNLF.

The protein resides in the cell membrane. This is an uncharacterized protein from Mycobacterium tuberculosis (strain ATCC 25618 / H37Rv).